Consider the following 408-residue polypeptide: Lysosomal phospholipase A and acyltransferase (408 aa).

An N-terminal signal peptide occupies residues 1-31 (MGLRRGPCPAALLPGGFLFLLLLADPALLAG). Residue aspartate 42 coordinates substrate. A disulfide bridge links cysteine 61 with cysteine 85. N-linked (GlcNAc...) asparagine glycosylation is present at asparagine 95. Serine 194 serves as the catalytic Acyl-ester intermediate. Serine 194 provides a ligand contact to Zn(2+). Methionine 195 lines the substrate pocket. Residues asparagine 269 and asparagine 285 are each glycosylated (N-linked (GlcNAc...) asparagine). Aspartate 336 and cysteine 351 together coordinate Zn(2+). Active-site charge relay system residues include aspartate 356 and histidine 388. Histidine 388 serves as a coordination point for Zn(2+). Asparagine 394 carries N-linked (GlcNAc...) asparagine glycosylation.

It belongs to the AB hydrolase superfamily. Lipase family. N-glycosylated. N-glycosylation is important for maturation of the enzyme and normal subcellular location.

It localises to the secreted. The protein localises to the lysosome. Its subcellular location is the membrane. It catalyses the reaction a 1,2-diacyl-sn-glycero-3-phosphocholine + H2O = a 2-acyl-sn-glycero-3-phosphocholine + a fatty acid + H(+). The enzyme catalyses 1-hexadecanoyl-2-(9Z-octadecenoyl)-sn-glycero-3-phosphocholine + H2O = 2-(9Z-octadecenoyl)-sn-glycero-3-phosphocholine + hexadecanoate + H(+). The catalysed reaction is 1,2-di-(9Z-octadecenoyl)-sn-glycero-3-phosphocholine + H2O = 2-(9Z-octadecenoyl)-sn-glycero-3-phosphocholine + (9Z)-octadecenoate + H(+). It carries out the reaction 1-hexadecanoyl-2-glutaroyl-sn-glycero-3-phosphocholine + H2O = 2-glutaroyl-sn-glycero-3-phosphocholine + hexadecanoate + H(+). It catalyses the reaction 1-hexadecanoyl-2-nonadioyl-sn-glycero-3-phosphocholine + H2O = 2-nonadioyl-sn-glycero-3-phosphocholine + hexadecanoate + H(+). The enzyme catalyses 1-hexadecanoyl-2-(5-oxopentanoyl)-sn-glycero-3-phosphocholine + H2O = 2-(5-oxopentanoyl)-sn-glycero-3-phosphocholine + hexadecanoate + H(+). The catalysed reaction is 1-hexadecanoyl-2-(9-oxononanoyl)-sn-glycero-3-phosphocholine + H2O = 2-(9-oxononanoyl)-sn-glycero-3-phosphocholine + hexadecanoate + H(+). It carries out the reaction 1,2-dihexadecanoyl-sn-glycero-3-phosphocholine + H2O = 2-hexadecanoyl-sn-glycero-3-phosphocholine + hexadecanoate + H(+). It catalyses the reaction a 1,2-diacyl-sn-glycero-3-phosphocholine + H2O = a 1-acyl-sn-glycero-3-phosphocholine + a fatty acid + H(+). The enzyme catalyses 1-hexadecanoyl-2-(9Z-octadecenoyl)-sn-glycero-3-phosphocholine + H2O = 1-hexadecanoyl-sn-glycero-3-phosphocholine + (9Z)-octadecenoate + H(+). The catalysed reaction is 1,2-di-(9Z-octadecenoyl)-sn-glycero-3-phosphocholine + H2O = 1-(9Z-octadecenoyl)-sn-glycero-3-phosphocholine + (9Z)-octadecenoate + H(+). It carries out the reaction 1,2-dihexadecanoyl-sn-glycero-3-phosphocholine + H2O = 1-hexadecanoyl-sn-glycero-3-phosphocholine + hexadecanoate + H(+). It catalyses the reaction a 1-acyl-sn-glycero-3-phosphocholine + H2O = sn-glycerol 3-phosphocholine + a fatty acid + H(+). The enzyme catalyses 1-hexadecanoyl-sn-glycero-3-phosphocholine + H2O = sn-glycerol 3-phosphocholine + hexadecanoate + H(+). The catalysed reaction is N-(acetyl)-sphing-4-enine + a 1,2-diacyl-sn-glycero-3-phosphoethanolamine = 1-O-acyl-N-(acetyl)-sphing-4-enine + a 2-acyl-sn-glycero-3-phosphoethanolamine. It carries out the reaction 1-hexadecanoyl-2-(9Z-octadecenoyl)-sn-glycero-3-phosphoethanolamine + N-(acetyl)-sphing-4-enine = 2-(9Z-octadecenoyl)-sn-glycero-3-phosphoethanolamine + 1-hexadecanoyl-N-(acetyl)-sphing-4-enine. It catalyses the reaction 1-hexadecanoyl-2-(9Z,12Z-octadecadienoyl)-sn-glycero-3-phosphoethanolamine + N-(acetyl)-sphing-4-enine = 2-(9Z,12Z)-octadecadienoyl-sn-glycero-3-phosphoethanolamine + 1-hexadecanoyl-N-(acetyl)-sphing-4-enine. The enzyme catalyses 1-hexadecanoyl-2-(5Z,8Z,11Z,14Z-eicosatetraenoyl)-sn-glycero-3-phosphoethanolamine + N-(acetyl)-sphing-4-enine = 2-(5Z,8Z,11Z,14Z)-eicosatetraenoyl-sn-glycero-3-phosphoethanolamine + 1-hexadecanoyl-N-(acetyl)-sphing-4-enine. The catalysed reaction is N-(acetyl)-sphing-4-enine + a 1,2-diacyl-sn-glycero-3-phosphoethanolamine = 1-O-acyl-N-(acetyl)-sphing-4-enine + a 1-acyl-sn-glycero-3-phosphoethanolamine. It carries out the reaction 1-hexadecanoyl-2-(9Z-octadecenoyl)-sn-glycero-3-phosphoethanolamine + N-(acetyl)-sphing-4-enine = 1-(9Z-octadecenoyl)-N-(acetyl)-sphing-4-enine + 1-hexadecanoyl-sn-glycero-3-phosphoethanolamine. It catalyses the reaction 1-hexadecanoyl-2-(9Z,12Z-octadecadienoyl)-sn-glycero-3-phosphoethanolamine + N-(acetyl)-sphing-4-enine = 1-(9Z,12Z-octadecadienoyl)-N-acetylsphing-4-enine + 1-hexadecanoyl-sn-glycero-3-phosphoethanolamine. The enzyme catalyses 1-hexadecanoyl-2-(5Z,8Z,11Z,14Z-eicosatetraenoyl)-sn-glycero-3-phosphoethanolamine + N-(acetyl)-sphing-4-enine = 1-(5Z,8Z,11Z,14Z)-eicosatetraenoyl-N-(acetyl)-sphing-4-enine + 1-hexadecanoyl-sn-glycero-3-phosphoethanolamine. The catalysed reaction is N-(acetyl)-sphing-4-enine + a 1,2-diacyl-sn-glycero-3-phosphocholine = 1-O-acyl-N-(acetyl)-sphing-4-enine + a 2-acyl-sn-glycero-3-phosphocholine. It carries out the reaction 1-hexadecanoyl-2-(9Z-octadecenoyl)-sn-glycero-3-phosphocholine + N-(acetyl)-sphing-4-enine = 1-hexadecanoyl-N-(acetyl)-sphing-4-enine + 2-(9Z-octadecenoyl)-sn-glycero-3-phosphocholine. It catalyses the reaction 1-hexadecanoyl-2-(9Z,12Z-octadecadienoyl)-sn-glycero-3-phosphocholine + N-(acetyl)-sphing-4-enine = 2-(9Z,12Z-octadecadienoyl)-sn-glycero-3-phosphocholine + 1-hexadecanoyl-N-(acetyl)-sphing-4-enine. The enzyme catalyses 1-hexadecanoyl-2-(5Z,8Z,11Z,14Z-eicosatetraenoyl)-sn-glycero-3-phosphocholine + N-(acetyl)-sphing-4-enine = 1-hexadecanoyl-N-(acetyl)-sphing-4-enine + 2-(5Z,8Z,11Z,14Z)-eicosatetraenoyl-sn-glycero-3-phosphocholine. The catalysed reaction is 1-hexadecanoyl-2-(4Z,7Z,10Z,13Z,16Z,19Z-docosahexaenoyl)-sn-glycero-3-phosphocholine + N-(acetyl)-sphing-4-enine = 2-(4Z,7Z,10Z,13Z,16Z,19Z-docosahexaenoyl)-sn-glycero-3-phosphocholine + 1-hexadecanoyl-N-(acetyl)-sphing-4-enine. It carries out the reaction 1-hexadecanoyl-2-nonadioyl-sn-glycero-3-phosphocholine + N-(acetyl)-sphing-4-enine = 2-nonadioyl-sn-glycero-3-phosphocholine + 1-hexadecanoyl-N-(acetyl)-sphing-4-enine. It catalyses the reaction 1-octadecanoyl-2-(9Z-octadecenoyl)-sn-glycero-3-phosphocholine + N-(acetyl)-sphing-4-enine = 1-octadecanoyl-N-(acetyl)-sphing-4-enine + 2-(9Z-octadecenoyl)-sn-glycero-3-phosphocholine. The enzyme catalyses 1-(9Z)-octadecenoyl-2-octadecanoyl-sn-glycero-3-phosphocholine + N-(acetyl)-sphing-4-enine = 2-octadecanoyl-sn-glycero-3-phosphocholine + 1-(9Z-octadecenoyl)-N-(acetyl)-sphing-4-enine. The catalysed reaction is 1-octadecanoyl-2-(5Z,8Z,11Z,14Z-eicosatetraenoyl)-sn-glycero-3-phosphocholine + N-(acetyl)-sphing-4-enine = 1-octadecanoyl-N-(acetyl)-sphing-4-enine + 2-(5Z,8Z,11Z,14Z)-eicosatetraenoyl-sn-glycero-3-phosphocholine. It carries out the reaction 1-(9Z-octadecenoyl)-2-hexadecanoyl-sn-glycero-3-phosphocholine + N-(acetyl)-sphing-4-enine = 1-(9Z-octadecenoyl)-N-(acetyl)-sphing-4-enine + 2-hexadecanoyl-sn-glycero-3-phosphocholine. It catalyses the reaction N-(acetyl)-sphing-4-enine + a 1,2-diacyl-sn-glycero-3-phosphocholine = 1-O-acyl-N-(acetyl)-sphing-4-enine + a 1-acyl-sn-glycero-3-phosphocholine. The enzyme catalyses 1-hexadecanoyl-2-(9Z-octadecenoyl)-sn-glycero-3-phosphocholine + N-(acetyl)-sphing-4-enine = 1-(9Z-octadecenoyl)-N-(acetyl)-sphing-4-enine + 1-hexadecanoyl-sn-glycero-3-phosphocholine. The catalysed reaction is 1-hexadecanoyl-2-(9Z,12Z-octadecadienoyl)-sn-glycero-3-phosphocholine + N-(acetyl)-sphing-4-enine = 1-(9Z,12Z-octadecadienoyl)-N-acetylsphing-4-enine + 1-hexadecanoyl-sn-glycero-3-phosphocholine. It carries out the reaction 1-hexadecanoyl-2-(5Z,8Z,11Z,14Z-eicosatetraenoyl)-sn-glycero-3-phosphocholine + N-(acetyl)-sphing-4-enine = 1-(5Z,8Z,11Z,14Z)-eicosatetraenoyl-N-(acetyl)-sphing-4-enine + 1-hexadecanoyl-sn-glycero-3-phosphocholine. It catalyses the reaction 1-hexadecanoyl-2-(4Z,7Z,10Z,13Z,16Z,19Z-docosahexaenoyl)-sn-glycero-3-phosphocholine + N-(acetyl)-sphing-4-enine = 1-(4Z,7Z,10Z,13Z,16Z,19Z-docosahexaenoyl)-N-(acetyl)-sphing-4-enine + 1-hexadecanoyl-sn-glycero-3-phosphocholine. The enzyme catalyses 1-octadecanoyl-2-(9Z-octadecenoyl)-sn-glycero-3-phosphocholine + N-(acetyl)-sphing-4-enine = 1-(9Z-octadecenoyl)-N-(acetyl)-sphing-4-enine + 1-octadecanoyl-sn-glycero-3-phosphocholine. The catalysed reaction is 1-octadecanoyl-2-(9Z,12Z)-octadecadienoyl-sn-glycero-3-phosphocholine + N-(acetyl)-sphing-4-enine = 1-(9Z,12Z-octadecadienoyl)-N-acetylsphing-4-enine + 1-octadecanoyl-sn-glycero-3-phosphocholine. It carries out the reaction 1-(9Z-octadecenoyl)-2-hexadecanoyl-sn-glycero-3-phosphocholine + N-(acetyl)-sphing-4-enine = 1-hexadecanoyl-N-(acetyl)-sphing-4-enine + 1-(9Z-octadecenoyl)-sn-glycero-3-phosphocholine. It catalyses the reaction 1-(9Z)-octadecenoyl-2-octadecanoyl-sn-glycero-3-phosphocholine + N-(acetyl)-sphing-4-enine = 1-octadecanoyl-N-(acetyl)-sphing-4-enine + 1-(9Z-octadecenoyl)-sn-glycero-3-phosphocholine. The enzyme catalyses 1,2-di-(9Z-octadecenoyl)-sn-glycero-3-phosphocholine + N-(acetyl)-sphing-4-enine = 1-(9Z-octadecenoyl)-N-(acetyl)-sphing-4-enine + 1-(9Z-octadecenoyl)-sn-glycero-3-phosphocholine. The catalysed reaction is 1-octadecanoyl-2-(5Z,8Z,11Z,14Z-eicosatetraenoyl)-sn-glycero-3-phosphocholine + N-(acetyl)-sphing-4-enine = 1-(5Z,8Z,11Z,14Z)-eicosatetraenoyl-N-(acetyl)-sphing-4-enine + 1-octadecanoyl-sn-glycero-3-phosphocholine. It carries out the reaction a 1,2-diacyl-sn-glycero-3-phospho-L-serine + N-(acetyl)-sphing-4-enine = a 2-acyl-sn-glycero-3-phospho-L-serine + 1-O-acyl-N-(acetyl)-sphing-4-enine. It catalyses the reaction 1-octadecanoyl-2-(9Z-octadecenoyl)-sn-glycero-3-phospho-L-serine + N-(acetyl)-sphing-4-enine = 2-(9Z-octadecenoyl)-sn-glycero-3-phospho-L-serine + 1-octadecanoyl-N-(acetyl)-sphing-4-enine. The enzyme catalyses a 1,2-diacyl-sn-glycero-3-phospho-L-serine + N-(acetyl)-sphing-4-enine = 1-O-acyl-N-(acetyl)-sphing-4-enine + a 1-acyl-sn-glycero-3-phospho-L-serine. The catalysed reaction is 1-octadecanoyl-2-(9Z-octadecenoyl)-sn-glycero-3-phospho-L-serine + N-(acetyl)-sphing-4-enine = 1-octadecanoyl-sn-glycero-3-phosphoserine + 1-(9Z-octadecenoyl)-N-(acetyl)-sphing-4-enine. It carries out the reaction a 1,2-diacyl-sn-glycero-3-phospho-(1'-sn-glycerol) + N-(acetyl)-sphing-4-enine = 2-acyl-sn-glycero-3-phospho-(1'-sn-glycerol) + 1-O-acyl-N-(acetyl)-sphing-4-enine. It catalyses the reaction 1-octadecanoyl-2-(9Z-octadecenoyl)-sn-glycero-3-phospho-(1'-sn-glycerol) + N-(acetyl)-sphing-4-enine = 2-(9Z-octadecenoyl)-sn-glycero-3-phospho-(1'-sn-glycerol) + 1-octadecanoyl-N-(acetyl)-sphing-4-enine. The enzyme catalyses a 1,2-diacyl-sn-glycero-3-phospho-(1'-sn-glycerol) + N-(acetyl)-sphing-4-enine = 1-O-acyl-N-(acetyl)-sphing-4-enine + 1-acyl-sn-glycero-3-phospho-(1'-sn-glycerol). The catalysed reaction is 1-octadecanoyl-2-(9Z-octadecenoyl)-sn-glycero-3-phospho-(1'-sn-glycerol) + N-(acetyl)-sphing-4-enine = 1-octadecanoyl-sn-glycero-3-phospho-(1'-sn-glycerol) + 1-(9Z-octadecenoyl)-N-(acetyl)-sphing-4-enine. It carries out the reaction an N-acylethanolamine + a 1,2-diacyl-sn-glycero-3-phosphocholine = 2-(acylamino)ethyl fatty acid + a 2-acyl-sn-glycero-3-phosphocholine. It catalyses the reaction an N-acylethanolamine + a 1,2-diacyl-sn-glycero-3-phosphocholine = 2-(acylamino)ethyl fatty acid + a 1-acyl-sn-glycero-3-phosphocholine. The enzyme catalyses N-(5Z,8Z,11Z,14Z-eicosatetraenoyl)-ethanolamine + 1,2-di-(9Z-octadecenoyl)-sn-glycero-3-phosphocholine = 2-[(5Z,8Z,11Z,14Z)-eicosatetraenoylamino]ethyl (9Z)-octadecenoate + (9Z-octadecenoyl)-sn-glycero-3-phosphocholine. The catalysed reaction is N-(9Z-octadecenoyl) ethanolamine + 1,2-di-(9Z-octadecenoyl)-sn-glycero-3-phosphocholine = 2-[(9Z)-octadecenoylamino]ethyl (9Z)-octadecenoate + (9Z-octadecenoyl)-sn-glycero-3-phosphocholine. It carries out the reaction a 3-acyl-sn-glycerol + a 1,2-diacyl-sn-glycero-3-phosphocholine = a 1,3-diacylglycerol + a 1-acyl-sn-glycero-3-phosphocholine. It catalyses the reaction a 3-acyl-sn-glycerol + a 1,2-diacyl-sn-glycero-3-phosphocholine = a 1,3-diacylglycerol + a 2-acyl-sn-glycero-3-phosphocholine. The enzyme catalyses 3-(9Z-octadecenoyl)-sn-glycerol + 1,2-di-(9Z-octadecenoyl)-sn-glycero-3-phosphocholine = 1,3-di-(9Z-octadecenoyl)-glycerol + (9Z-octadecenoyl)-sn-glycero-3-phosphocholine. The catalysed reaction is 3-hexadecanoyl-sn-glycerol + 1,2-di-(9Z-octadecenoyl)-sn-glycero-3-phosphocholine = 1-(9Z)-octadecenoyl-3-hexadecanoyl-sn-glycerol + (9Z-octadecenoyl)-sn-glycero-3-phosphocholine. It carries out the reaction a 1-acyl-sn-glycerol + a 1,2-diacyl-sn-glycero-3-phosphocholine = a 1,3-diacylglycerol + a 2-acyl-sn-glycero-3-phosphocholine. It catalyses the reaction a 1-acyl-sn-glycerol + a 1,2-diacyl-sn-glycero-3-phosphocholine = a 1,3-diacylglycerol + a 1-acyl-sn-glycero-3-phosphocholine. The enzyme catalyses 1-(9Z-octadecenoyl)-sn-glycerol + 1,2-di-(9Z-octadecenoyl)-sn-glycero-3-phosphocholine = 1,3-di-(9Z-octadecenoyl)-glycerol + (9Z-octadecenoyl)-sn-glycero-3-phosphocholine. The catalysed reaction is 1-hexadecanoyl-sn-glycerol + 1,2-di-(9Z-octadecenoyl)-sn-glycero-3-phosphocholine = 1-hexadecanoyl-3-(9Z)-octadecenoyl-sn-glycerol + (9Z-octadecenoyl)-sn-glycero-3-phosphocholine. It carries out the reaction a 2-acylglycerol + a 1,2-diacyl-sn-glycero-3-phosphocholine = a 1,2-diacylglycerol + a 2-acyl-sn-glycero-3-phosphocholine. It catalyses the reaction a 2-acylglycerol + a 1,2-diacyl-sn-glycero-3-phosphocholine = a 1,2-diacylglycerol + a 1-acyl-sn-glycero-3-phosphocholine. The enzyme catalyses 2-hexadecanoylglycerol + 1,2-di-(9Z-octadecenoyl)-sn-glycero-3-phosphocholine = 1-(9Z)-octadecenoyl-2-hexadecanoylglycerol + (9Z-octadecenoyl)-sn-glycero-3-phosphocholine. The catalysed reaction is 1-O-alkylglycerol + a 1,2-diacyl-sn-glycero-3-phosphocholine = 1-O-alkyl-3-acylglycerol + a 1-acyl-sn-glycero-3-phosphocholine. It carries out the reaction 1-O-alkylglycerol + a 1,2-diacyl-sn-glycero-3-phosphocholine = 1-O-alkyl-3-acylglycerol + a 2-acyl-sn-glycero-3-phosphocholine. It catalyses the reaction 1-O-hexadecylglycerol + 1,2-di-(9Z-octadecenoyl)-sn-glycero-3-phosphocholine = 1-O-hexadecyl-3-(9Z)-octadecenoylglycerol + (9Z-octadecenoyl)-sn-glycero-3-phosphocholine. The enzyme catalyses 1-O-alkyl-2-acyl-sn-glycerol + a 1,2-diacyl-sn-glycero-3-phosphocholine = 1-O-alkyl-2,3-diacyl-sn-glycerol + a 2-acyl-sn-glycero-3-phosphocholine. The catalysed reaction is 1-O-alkyl-2-acyl-sn-glycerol + a 1,2-diacyl-sn-glycero-3-phosphocholine = 1-O-alkyl-2,3-diacyl-sn-glycerol + a 1-acyl-sn-glycero-3-phosphocholine. It carries out the reaction 1-O-hexadecyl-2-acetyl-sn-glycerol + 1,2-di-(9Z-octadecenoyl)-sn-glycero-3-phosphocholine = 1-O-hexadecyl-2-acetyl-3-(9Z)-octadecenoyl-sn-glycerol + (9Z-octadecenoyl)-sn-glycero-3-phosphocholine. It catalyses the reaction 1-O-hexadecyl-2-O-methyl-sn-glycerol + 1,2-di-(9Z-octadecenoyl)-sn-glycero-3-phosphocholine = 1-O-hexadecyl-2-O-methyl-3-(9Z)-octadecenoyl-sn-glycerol + (9Z-octadecenoyl)-sn-glycero-3-phosphocholine. The enzyme catalyses a 1,2-diacyl-sn-glycero-3-phosphoethanolamine + H2O = a 1-acyl-sn-glycero-3-phosphoethanolamine + a fatty acid + H(+). The catalysed reaction is 1-acyl-2-(5Z,8Z,11Z,14Z)-eicosatetraenoyl-sn-glycero-3-phosphoethanolamine + H2O = a 1-acyl-sn-glycero-3-phosphoethanolamine + (5Z,8Z,11Z,14Z)-eicosatetraenoate + H(+). It carries out the reaction a 1,2-diacyl-sn-glycero-3-phospho-(1'-sn-glycerol) + H2O = 1-acyl-sn-glycero-3-phospho-(1'-sn-glycerol) + a fatty acid + H(+). It catalyses the reaction 1-hexadecanoyl-2-(9Z-octadecenoyl)-sn-glycero-3-phospho-(1'-sn-glycerol) + H2O = 1-hexadecanoyl-sn-glycero-3-phospho-(1'-sn-glycerol) + (9Z)-octadecenoate + H(+). The enzyme catalyses a 1,2-diacyl-sn-glycero-3-phospho-(1'-sn-glycerol) + H2O = 2-acyl-sn-glycero-3-phospho-(1'-sn-glycerol) + a fatty acid + H(+). The catalysed reaction is 1-hexadecanoyl-2-(9Z-octadecenoyl)-sn-glycero-3-phospho-(1'-sn-glycerol) + H2O = 2-(9Z-octadecenoyl)-sn-glycero-3-phospho-(1'-sn-glycerol) + hexadecanoate + H(+). Functionally, has dual calcium-independent phospholipase and O-acyltransferase activities with a potential role in glycerophospholipid homeostasis and remodeling of acyl groups of lipophilic alcohols present in acidic cellular compartments. Catalyzes hydrolysis of the ester bond of the fatty acyl group attached at sn-1 or sn-2 position of phospholipids (phospholipase A1 or A2 activity) and transfer it to the hydroxyl group at the first carbon of lipophilic alcohols (O-acyltransferase activity). Among preferred fatty acyl donors are phosphatidylcholines, phosphatidylethanolamines, phosphatidylglycerols and phosphatidylserines. Favors sn-2 over sn-1 deacylation of unsaturated fatty acyl groups of phosphatidylcholines, phosphatidylethanolamines, and phosphatidylglycerols. Among preferred fatty acyl acceptors are natural lipophilic alcohols including short-chain ceramide N-acetyl-sphingosine (C2 ceramide), alkylacylglycerols, monoacylglycerols, and acylethanolamides such as anandamide and oleoylethanolamide. Selectively hydrolyzes the sn-1 fatty acyl group of truncated oxidized phospholipids and may play a role in detoxification of reactive oxidized phospholipids during oxidative stress. Required for normal phospholipid degradation in alveolar macrophages with potential implications in the clearance of pulmonary surfactant, which is mainly composed of dipalmitoylphosphatidylcholine (1,2-dihexadecanoyl-sn-glycero-3-phosphocholine). Involved in the first step of bis(monoacylglycero)phosphate (BMP) de novo synthesis from phosphatidylglycerol (1,2-diacyl-sn-glycero-3-phospho-(1'-sn-glycerol), PG). BMP is an important player in cargo sorting and degradation, regulation of cellular cholesterol levels and intercellular communication. At neutral pH, hydrolyzes the sn-1 fatty acyl group of the lysophosphatidylcholines. The sequence is that of Lysosomal phospholipase A and acyltransferase (PLA2G15) from Canis lupus familiaris (Dog).